Consider the following 68-residue polypeptide: Basic phospholipase A2 homolog BdipTx-I (68 aa).

Cys-28 and Cys-44 form a disulfide bridge.

It belongs to the phospholipase A2 family. Group II subfamily. K49 sub-subfamily. Expressed by the venom gland.

Its subcellular location is the secreted. Functionally, snake venom phospholipase A2 (PLA2) that lacks enzymatic activity. Is myotoxic, induces edema, and causes systemic effects (renal changes that lead to proteinuria) on mice. A model of myotoxic mechanism has been proposed: an apo Lys49-PLA2 is activated by the entrance of a hydrophobic molecule (e.g. fatty acid) at the hydrophobic channel of the protein leading to a reorientation of a monomer. This reorientation causes a transition between 'inactive' to 'active' states, causing alignment of C-terminal and membrane-docking sites (MDoS) side-by-side and putting the membrane-disruption sites (MDiS) in the same plane, exposed to solvent and in a symmetric position for both monomers. The MDoS region stabilizes the toxin on membrane by the interaction of charged residues with phospholipid head groups. Subsequently, the MDiS region destabilizes the membrane with penetration of hydrophobic residues. This insertion causes a disorganization of the membrane, allowing an uncontrolled influx of ions (i.e. calcium and sodium), and eventually triggering irreversible intracellular alterations and cell death. This is Basic phospholipase A2 homolog BdipTx-I from Bothrops diporus (Chaco lancehead).